The chain runs to 415 residues: Imidazolonepropionase (415 aa).

Fe(3+) is bound by residues His80 and His82. Residues His80 and His82 each contribute to the Zn(2+) site. 4-imidazolone-5-propanoate contacts are provided by Arg89, Tyr152, and His185. Tyr152 provides a ligand contact to N-formimidoyl-L-glutamate. Residue His250 coordinates Fe(3+). His250 serves as a coordination point for Zn(2+). Residue Gln253 coordinates 4-imidazolone-5-propanoate. Position 325 (Asp325) interacts with Fe(3+). Zn(2+) is bound at residue Asp325. N-formimidoyl-L-glutamate-binding residues include Asn327 and Gly329. Position 330 (Thr330) interacts with 4-imidazolone-5-propanoate.

The protein belongs to the metallo-dependent hydrolases superfamily. HutI family. Zn(2+) serves as cofactor. Fe(3+) is required as a cofactor.

It is found in the cytoplasm. It catalyses the reaction 4-imidazolone-5-propanoate + H2O = N-formimidoyl-L-glutamate. It participates in amino-acid degradation; L-histidine degradation into L-glutamate; N-formimidoyl-L-glutamate from L-histidine: step 3/3. Functionally, catalyzes the hydrolytic cleavage of the carbon-nitrogen bond in imidazolone-5-propanoate to yield N-formimidoyl-L-glutamate. It is the third step in the universal histidine degradation pathway. The polypeptide is Imidazolonepropionase (Rhizobium meliloti (strain 1021) (Ensifer meliloti)).